The chain runs to 397 residues: MALLRGVFIVAAKRTPFGAYGGLLKDFSATDLTEFAARAALSAGKVPPETIDSVIVGNVMQSSSDAAYLARHVGLRVGVPTETGALTLNRLCGSGFQSIVSGCQEICSKDAEVVLCGGTESMSQSPYCVRNVRFGTKFGLDLKLEDTLWAGLTDQHVKLPMGMTAENLAAKYNISREDCDRYALQSQQRWKAANEAGYFNEEMAPIEVKTKKGKQTMQVDEHARPQTTLEQLQKLPSVFKKDGTVTAGNASGVSDGAGAVIIASEDAVKKHNFTPLARVVGYFVSGCDPTIMGIGPVPAINGALKKAGLSLKDMDLIDVNEAFAPQFLSVQKALDLDPSKTNVSGGAIALGHPLGGSGSRITAHLVHELRRRGGKYAVGSACIGGGQGIALIIQNTA.

The transit peptide at 1–16 directs the protein to the mitochondrion; not cleaved; it reads MALLRGVFIVAAKRTP. Residue Lys25 is modified to N6-acetyllysine; alternate. An N6-succinyllysine; alternate modification is found at Lys25. Ser28 carries the post-translational modification Phosphoserine. Lys45 is subject to N6-succinyllysine. Cys92 acts as the Acyl-thioester intermediate in catalysis. Position 119 is a phosphothreonine (Thr119). Ser121 is subject to Phosphoserine. Phosphotyrosine is present on Tyr127. Thr136 bears the Phosphothreonine mark. N6-acetyllysine; alternate is present on residues Lys137, Lys143, Lys158, Lys171, Lys191, and Lys209. 6 positions are modified to N6-succinyllysine; alternate: Lys137, Lys143, Lys158, Lys171, Lys191, and Lys209. N6-succinyllysine is present on residues Lys211, Lys212, and Lys214. CoA contacts are provided by Arg224 and Thr227. Lys234 is modified (N6-acetyllysine; alternate). Lys234 carries the N6-succinyllysine; alternate modification. Lys240 carries the post-translational modification N6-succinyllysine. Position 241 is an N6-acetyllysine (Lys241). Ser251 provides a ligand contact to CoA. Lys269 and Lys270 each carry N6-acetyllysine. Position 305 is an N6-acetyllysine; alternate (Lys305). Position 305 is an N6-succinyllysine; alternate (Lys305). Ser310 is modified (phosphoserine). Lys312 is modified (N6-acetyllysine; alternate). Lys312 is modified (N6-succinyllysine; alternate). Lys340 carries the post-translational modification N6-acetyllysine. Ser344 carries the phosphoserine modification. Lys375 is modified (N6-acetyllysine). Cys382 serves as the catalytic Proton donor/acceptor.

The protein belongs to the thiolase-like superfamily. Thiolase family. Homotetramer. Interacts with BNIP3.

It localises to the mitochondrion. It carries out the reaction an acyl-CoA + acetyl-CoA = a 3-oxoacyl-CoA + CoA. The catalysed reaction is 2 acetyl-CoA = acetoacetyl-CoA + CoA. The enzyme catalyses acetyl-CoA + H2O = acetate + CoA + H(+). It catalyses the reaction propanoyl-CoA + H2O = propanoate + CoA + H(+). It carries out the reaction butanoyl-CoA + H2O = butanoate + CoA + H(+). The catalysed reaction is hexanoyl-CoA + H2O = hexanoate + CoA + H(+). The enzyme catalyses octanoyl-CoA + H2O = octanoate + CoA + H(+). It catalyses the reaction decanoyl-CoA + H2O = decanoate + CoA + H(+). It carries out the reaction dodecanoyl-CoA + H2O = dodecanoate + CoA + H(+). The catalysed reaction is tetradecanoyl-CoA + H2O = tetradecanoate + CoA + H(+). The enzyme catalyses hexadecanoyl-CoA + H2O = hexadecanoate + CoA + H(+). It functions in the pathway lipid metabolism; fatty acid beta-oxidation. Its function is as follows. In the production of energy from fats, this is one of the enzymes that catalyzes the last step of the mitochondrial beta-oxidation pathway, an aerobic process breaking down fatty acids into acetyl-CoA. Using free coenzyme A/CoA, catalyzes the thiolytic cleavage of medium- to long-chain unbranched 3-oxoacyl-CoAs into acetyl-CoA and a fatty acyl-CoA shortened by two carbon atoms. Also catalyzes the condensation of two acetyl-CoA molecules into acetoacetyl-CoA and could be involved in the production of ketone bodies. Also displays hydrolase activity on various fatty acyl-CoAs. Thereby, could be responsible for the production of acetate in a side reaction to beta-oxidation. Abolishes BNIP3-mediated apoptosis and mitochondrial damage. The polypeptide is 3-ketoacyl-CoA thiolase, mitochondrial (Acaa2) (Mus musculus (Mouse)).